The following is a 594-amino-acid chain: RAS guanyl-releasing protein 2-B (594 aa).

Residues 3–121 (SSDLDKGLTI…SLIDIESVPS (119 aa)) form the N-terminal Ras-GEF domain. Positions 149-382 (DPAELAEHLT…YQLSLQREPR (234 aa)) constitute a Ras-GEF domain. Residues 377–403 (LQREPRARSTQTHAKSPPSPSPPLEEW) form a disordered region. 2 consecutive EF-hand domains span residues 418–453 (HIEKMVESVFRLFDEDGDGHISQEEFQSVRSNFPYL) and 455–482 (AFNEIDQNQDGKISKQEMTSYFLRASSV). Asp431, Asp433, Asp435, His437, Glu442, Asp460, Asn462, Asp464, Lys466, and Glu471 together coordinate Ca(2+). The Phorbol-ester/DAG-type zinc-finger motif lies at 490–540 (IHNFAERTFLRPVSCQHCRNLILGIYKKGLKCKACGITCHKHCRDHLSIEC).

This sequence belongs to the RASGRP family.

The protein localises to the cytoplasm. It localises to the cytosol. It is found in the cell membrane. The protein resides in the synapse. Its subcellular location is the synaptosome. Functions as a calcium- and DAG-regulated nucleotide exchange factor specifically activating Rap through the exchange of bound GDP for GTP. May function in cell aggregation and adhesion. This chain is RAS guanyl-releasing protein 2-B (rasgrp2-b), found in Xenopus laevis (African clawed frog).